Consider the following 324-residue polypeptide: tRNA dimethylallyltransferase (324 aa).

Residue 17-24 (GPTASGKT) participates in ATP binding. 19 to 24 (TASGKT) provides a ligand contact to substrate. Interaction with substrate tRNA stretches follow at residues 42-45 (DSAL), 166-170 (QRIQR), 251-256 (RCVGYR), and 284-291 (KRQITWLR).

Belongs to the IPP transferase family. In terms of assembly, monomer. The cofactor is Mg(2+).

It catalyses the reaction adenosine(37) in tRNA + dimethylallyl diphosphate = N(6)-dimethylallyladenosine(37) in tRNA + diphosphate. Functionally, catalyzes the transfer of a dimethylallyl group onto the adenine at position 37 in tRNAs that read codons beginning with uridine, leading to the formation of N6-(dimethylallyl)adenosine (i(6)A). This is tRNA dimethylallyltransferase from Burkholderia vietnamiensis (strain G4 / LMG 22486) (Burkholderia cepacia (strain R1808)).